The chain runs to 967 residues: Probable disease resistance protein At1g61190 (967 aa).

Positions 20–68 (RCLCGKGYIRNLEKNLRALQREMEDLRATQHEVQNKVAREESRHQQRLE) form a coiled coil. A disordered region spans residues 132–153 (GNFDEVSQPPPRSEVEERPTQP). The region spanning 138–441 (SQPPPRSEVE…CEGFIGEDQV (304 aa)) is the NB-ARC domain. 180-187 (GMGGVGKT) contacts ATP. LRR repeat units lie at residues 516 to 537 (AVRRMSLMMNEIEEITCESKCS), 538 to 559 (ELTTLFLQSNQLKNLSGEFIRY), 562 to 585 (KLVVLDLSHNPDFNELPEQISGLV), 586 to 608 (SLQYLDLSWTRIEQLPVGLKELK), and 609 to 631 (KLIFLNLCFTERLCSISGISRLL).

The protein belongs to the disease resistance NB-LRR family.

In terms of biological role, probable disease resistance protein. This is Probable disease resistance protein At1g61190 from Arabidopsis thaliana (Mouse-ear cress).